The following is a 738-amino-acid chain: Dipeptidyl peptidase 3 (738 aa).

Alanine 2 carries the N-acetylalanine modification. Histidine 450 is a binding site for Zn(2+). The active site involves glutamate 451. The Zn(2+) site is built by histidine 455 and glutamate 508.

This sequence belongs to the peptidase M49 family. Requires Zn(2+) as cofactor.

The protein resides in the cytoplasm. It carries out the reaction Release of an N-terminal dipeptide from a peptide comprising four or more residues, with broad specificity. Also acts on dipeptidyl 2-naphthylamides.. Its activity is regulated as follows. Inhibited by spinorphin, an opioid peptide derived from hemoglobin. In terms of biological role, cleaves and degrades bioactive peptides, including angiotensin, Leu-enkephalin and Met-enkephalin. Also cleaves Arg-Arg-beta-naphthylamide. This is Dipeptidyl peptidase 3 (Dpp3) from Rattus norvegicus (Rat).